The primary structure comprises 100 residues: SAGA-associated factor 11 (100 aa).

Residues 73-94 (FQCENCGRSIAGGRFAQHMTKC) form an SGF11-type zinc finger.

Belongs to the SGF11 family. In terms of assembly, component of the 1.8 MDa SAGA transcription coactivator-HAT complex. SAGA is built of 5 distinct domains with specialized functions. Within the SAGA complex, SUS1, SGF11, SGF73 and UBP8 form an additional subcomplex of SAGA called the DUB module (deubiquitination module). Interacts directly with SGF73, SUS1 and UBP8.

The protein resides in the nucleus. Functions as a component of the transcription regulatory histone acetylation (HAT) complex SAGA. At the promoters, SAGA is required for recruitment of the basal transcription machinery. It influences RNA polymerase II transcriptional activity through different activities such as TBP interaction and promoter selectivity, interaction with transcription activators, and chromatin modification through histone acetylation and deubiquitination. SAGA acetylates nucleosomal histone H3 to some extent (to form H3K9ac, H3K14ac, H3K18ac and H3K23ac). SAGA interacts with DNA via upstream activating sequences (UASs). Involved in transcriptional regulation of a subset of SAGA-regulated genes. Within the SAGA complex, participates in a subcomplex, that specifically deubiquitinates histones H2B. The polypeptide is SAGA-associated factor 11 (Debaryomyces hansenii (strain ATCC 36239 / CBS 767 / BCRC 21394 / JCM 1990 / NBRC 0083 / IGC 2968) (Yeast)).